Here is a 428-residue protein sequence, read N- to C-terminus: Serine hydroxymethyltransferase (428 aa).

Residues Leu117 and 121 to 123 (GHL) each bind (6S)-5,6,7,8-tetrahydrofolate. Lys226 carries the post-translational modification N6-(pyridoxal phosphate)lysine.

This sequence belongs to the SHMT family. As to quaternary structure, homodimer. It depends on pyridoxal 5'-phosphate as a cofactor.

Its subcellular location is the cytoplasm. It catalyses the reaction (6R)-5,10-methylene-5,6,7,8-tetrahydrofolate + glycine + H2O = (6S)-5,6,7,8-tetrahydrofolate + L-serine. Its pathway is one-carbon metabolism; tetrahydrofolate interconversion. It functions in the pathway amino-acid biosynthesis; glycine biosynthesis; glycine from L-serine: step 1/1. Its function is as follows. Catalyzes the reversible interconversion of serine and glycine with tetrahydrofolate (THF) serving as the one-carbon carrier. This reaction serves as the major source of one-carbon groups required for the biosynthesis of purines, thymidylate, methionine, and other important biomolecules. Also exhibits THF-independent aldolase activity toward beta-hydroxyamino acids, producing glycine and aldehydes, via a retro-aldol mechanism. The chain is Serine hydroxymethyltransferase from Aquifex aeolicus (strain VF5).